The sequence spans 635 residues: Protein MICRORCHIDIA 1 (635 aa).

The disordered stretch occupies residues 491 to 511; it reads RTVIPDQPPTVNTYNPSPLPS. The stretch at 588–635 forms a coiled coil; that stretch reads MRCEEYVKKENEVEQTVKSLEKELEEIKSKCAQLALLVDAKKKEMQQV.

Belongs to the MORC ATPase protein family. In terms of assembly, homodimer and heterodimer with MORC6. Component of an RNA-directed DNA methylation (RdDM) complex that contains at least MORC6, MORC1/CRT1, MORC2, SWI3D and SUVH9. Binds directly to SUVH2 and SUVH9. Interacts with the resistance proteins RCY1, RPM1, SNC1, RPP8, SSI4 and RPS2. The interactions with various resistance proteins are disrupted when these resistance proteins are activated. Interacts with the PAMP recognition receptor FLS2. Mg(2+) serves as cofactor. The cofactor is Mn(2+). In terms of tissue distribution, expressed constitutively.

It localises to the nucleus. Its subcellular location is the endosome. Mediator of defense signaling triggered by distinct classes of R proteins. Required during hypersensitive response (HR) that confers disease resistance to turnip crinkle virus (TCV). Exhibits ATPase activity. Contributes to resistance against Pseudomonas syringae and Hyaloperonospora arabidopsidis, at early stages prior to cytosolic calcium ions Ca(2+) accumulation. Required for pathogen-associated molecular pattern (PAMP)-triggered immunity (PTI), basal resistance, non-host resistance and systemic acquired resistance (SAR). Binds DNA/RNA in a non-specific manner and exhibits endonuclease activity. Probably involved in DNA repair. Required for both RPP8- and SSI4-mediated resistance responses, thus being involved in both TIR- and CC-NB-LRR pathways. Involved in RNA-directed DNA methylation (RdDM) as a component of the RdDM machinery and required for gene silencing. May also be involved in the regulation of chromatin architecture to maintain gene silencing. In Arabidopsis thaliana (Mouse-ear cress), this protein is Protein MICRORCHIDIA 1.